The sequence spans 818 residues: Glycogen phosphorylase (818 aa).

Position 667 is an N6-(pyridoxal phosphate)lysine (Lys667).

Belongs to the glycogen phosphorylase family. Pyridoxal 5'-phosphate is required as a cofactor.

The catalysed reaction is [(1-&gt;4)-alpha-D-glucosyl](n) + phosphate = [(1-&gt;4)-alpha-D-glucosyl](n-1) + alpha-D-glucose 1-phosphate. Functionally, phosphorylase is an important allosteric enzyme in carbohydrate metabolism. Enzymes from different sources differ in their regulatory mechanisms and in their natural substrates. However, all known phosphorylases share catalytic and structural properties. This is Glycogen phosphorylase (glgP) from Pasteurella multocida (strain Pm70).